Here is a 34-residue protein sequence, read N- to C-terminus: Photosystem II reaction center protein M (34 aa).

A helical transmembrane segment spans residues 5-25 (ILAFIATALFILVPTAFLLII).

It belongs to the PsbM family. PSII is composed of 1 copy each of membrane proteins PsbA, PsbB, PsbC, PsbD, PsbE, PsbF, PsbH, PsbI, PsbJ, PsbK, PsbL, PsbM, PsbT, PsbX, PsbY, PsbZ, Psb30/Ycf12, at least 3 peripheral proteins of the oxygen-evolving complex and a large number of cofactors. It forms dimeric complexes.

The protein resides in the plastid. Its subcellular location is the chloroplast thylakoid membrane. One of the components of the core complex of photosystem II (PSII). PSII is a light-driven water:plastoquinone oxidoreductase that uses light energy to abstract electrons from H(2)O, generating O(2) and a proton gradient subsequently used for ATP formation. It consists of a core antenna complex that captures photons, and an electron transfer chain that converts photonic excitation into a charge separation. This subunit is found at the monomer-monomer interface. The polypeptide is Photosystem II reaction center protein M (Buxus microphylla (Littleleaf boxwood)).